We begin with the raw amino-acid sequence, 68 residues long: Conotoxin Mr3.3 (68 aa).

A signal peptide spans 1-19 (MSRLGVLLTICLLLFPLTA). The propeptide occupies 20 to 51 (VPLDGDQPADRPAERLQDDISSEHHPHFDSGR). Residues 22–46 (LDGDQPADRPAERLQDDISSEHHPH) form a disordered region. Basic and acidic residues predominate over residues 27–46 (PADRPAERLQDDISSEHHPH). 3 cysteine pairs are disulfide-bonded: Cys-53/Cys-67, Cys-54/Cys-63, and Cys-59/Cys-66. 4-hydroxyproline is present on Pro-65.

It belongs to the conotoxin M superfamily. As to expression, expressed by the venom duct.

The protein localises to the secreted. This chain is Conotoxin Mr3.3, found in Conus marmoreus (Marble cone).